We begin with the raw amino-acid sequence, 102 residues long: Hypersensitivity to hygromycin-B protein 1 (102 aa).

Residues 1–17 (MSLSFLLFSPFLPPCFS) form the signal peptide. The helical transmembrane segment at 18-38 (SISICLSVLSTVSFFFAFTIP) threads the bilayer. At 39 to 69 (HYVLRCGSVDEWHIHSSAEDFRTQRCVCAVK) the chain is on the cytoplasmic side. Residues 70 to 90 (LSASLLGCLLACASWSLLLEV) traverse the membrane as a helical segment. Topologically, residues 91–102 (SRIKWHVGTAYS) are extracellular.

Its subcellular location is the membrane. Functionally, involved in vacuolar trafficking. The sequence is that of Hypersensitivity to hygromycin-B protein 1 from Saccharomyces cerevisiae (strain ATCC 204508 / S288c) (Baker's yeast).